The following is an 821-amino-acid chain: DNA gyrase subunit A (821 aa).

Positions 35–500 (LPDVRDGLKP…GLETIEDEDL (466 aa)) constitute a Topo IIA-type catalytic domain. Tyr123 (O-(5'-phospho-DNA)-tyrosine intermediate) is an active-site residue. The GyrA-box motif lies at 527 to 533 (QKRGGKG).

The protein belongs to the type II topoisomerase GyrA/ParC subunit family. As to quaternary structure, heterotetramer, composed of two GyrA and two GyrB chains. In the heterotetramer, GyrA contains the active site tyrosine that forms a transient covalent intermediate with DNA, while GyrB binds cofactors and catalyzes ATP hydrolysis.

Its subcellular location is the cytoplasm. The enzyme catalyses ATP-dependent breakage, passage and rejoining of double-stranded DNA.. Functionally, a type II topoisomerase that negatively supercoils closed circular double-stranded (ds) DNA in an ATP-dependent manner to modulate DNA topology and maintain chromosomes in an underwound state. Negative supercoiling favors strand separation, and DNA replication, transcription, recombination and repair, all of which involve strand separation. Also able to catalyze the interconversion of other topological isomers of dsDNA rings, including catenanes and knotted rings. Type II topoisomerases break and join 2 DNA strands simultaneously in an ATP-dependent manner. The polypeptide is DNA gyrase subunit A (Bacillus subtilis (strain 168)).